Here is an 820-residue protein sequence, read N- to C-terminus: Phenylalanine--tRNA ligase beta subunit (820 aa).

The tRNA-binding domain maps to 42–154; it reads KGGLEGLVIG…EDAVPGTLAK (113 aa). The 77-residue stretch at 413–489 folds into the B5 domain; it reads AQDFIVELTY…RIYGYNNVEI (77 aa). Mg(2+) contacts are provided by aspartate 467, aspartate 473, glutamate 476, and aspartate 477. An FDX-ACB domain is found at 727-820; that stretch reads SKFPAVKRDL…LEDKLGAKLR (94 aa).

It belongs to the phenylalanyl-tRNA synthetase beta subunit family. Type 1 subfamily. In terms of assembly, tetramer of two alpha and two beta subunits. Mg(2+) is required as a cofactor.

It localises to the cytoplasm. The enzyme catalyses tRNA(Phe) + L-phenylalanine + ATP = L-phenylalanyl-tRNA(Phe) + AMP + diphosphate + H(+). The chain is Phenylalanine--tRNA ligase beta subunit from Bacteroides fragilis (strain ATCC 25285 / DSM 2151 / CCUG 4856 / JCM 11019 / LMG 10263 / NCTC 9343 / Onslow / VPI 2553 / EN-2).